The sequence spans 966 residues: Polycystin-2 (966 aa).

The tract at residues Met1 to Gly106 is disordered. Residues Met1–Ser217 lie on the Cytoplasmic side of the membrane. Residues Val30–Glu44 show a composition bias toward gly residues. Residues Arg46–Arg56 are compositionally biased toward basic and acidic residues. A compositionally biased stretch (low complexity) spans Ala58–Ser79. Ser72 and Ser76 each carry phosphoserine. The span at Glu91–Glu105 shows a compositional bias: acidic residues. Arg135 carries the omega-N-methylarginine modification. Residues His147 to Glu179 form a disordered region. The chain crosses the membrane as a helical span at residues Val218–Met239. Over Met240–Ala466 the chain is Extracellular. 3 N-linked (GlcNAc...) asparagine glycosylation sites follow: Asn297, Asn303, and Asn326. A disulfide bridge links Cys329 with Cys342. Residues Asn360 and Asn373 are each glycosylated (N-linked (GlcNAc...) asparagine). The chain crosses the membrane as a helical span at residues Phe467 to Val487. The Cytoplasmic portion of the chain corresponds to Glu488–Ser503. Residues Phe504–Ile524 traverse the membrane as a helical segment. The Extracellular portion of the chain corresponds to Tyr525–Ala550. The chain crosses the membrane as a helical span at residues Tyr551–Leu571. A cholesterol-binding site is contributed by Gln555. Residues Phe572–Leu595 lie on the Cytoplasmic side of the membrane. The helical transmembrane segment at Phe596–Phe617 threads the bilayer. Residues Gly618–Glu629 lie on the Extracellular side of the membrane. Residues Cys630 to Phe644 constitute an intramembrane region (pore-forming). Leu639 is a Ca(2+) binding site. The Selectivity filter signature appears at Leu639 to Asp641. The Extracellular portion of the chain corresponds to Ala645–Arg652. Residues Val653–Met673 traverse the membrane as a helical segment. The Cytoplasmic portion of the chain corresponds to Phe674–Ala966. The EF-hand domain occupies His748–Glu783. Ca(2+)-binding residues include Asp761, Asp763, Asp765, Glu767, and Glu772. Positions Gly764 to Ile828 are disordered. Over residues Leu768–Ser793 the composition is skewed to basic and acidic residues. The segment covering Leu794–Arg805 has biased composition (low complexity). 4 positions are modified to phosphoserine: Ser799, Ser806, Ser810, and Ser827. The segment at Arg801 to His820 is linker. The segment at Asp808 to Gly819 is important for interaction with PACS1 and PACS2. A coiled-coil region spans residues Gly831–Arg870. Residues Trp914 to Ala966 are disordered. Residues Ala919 to Val931 are compositionally biased toward polar residues.

This sequence belongs to the polycystin family. Homotetramer. Component of the heterotetrameric polycystin channel complex with PKD1; the tetramer contains one PKD1 chain and three PKD2 chains. Interaction with PKD1 is required for ciliary localization. Isoform 1 interacts with PKD1 while isoform 3 does not. Interacts with PKD1L1. Interacts with CD2AP. Interacts with HAX1. Interacts with NEK8. Part of a complex containing AKAP5, ADCY5, ADCY6 and PDE4C. Interacts (via C-terminus) with TRPV4 (via C-terminus). Interacts (via C-terminal acidic region) with PACS1 and PACS2; these interactions retain the protein in the endoplasmic reticulum and prevent trafficking to the cell membrane. Interacts with TMEM33; enhancing its opening at the ER membrane. Interacts with TMEM120A; TMEM120A inhibits PKD2 channel activity through the physical association of PKD2 with TMEM120A. Interacts (via N-terminus) with RYR2; regulates RYR2 channel activity. In terms of processing, N-glycosylated. The four subunits in a tetramer probably differ in the extent of glycosylation; simultaneous glycosylation of all experimentally validated sites would probably create steric hindrance. Post-translationally, sumoylated by SUMO1; sumoylation regulates PKD2 membrane recycling and is necessary for intravascular pressure-induced arterial contractility. Phosphorylated. Phosphorylation is important for protein function; a mutant that lacks the N-terminal phosphorylation sites cannot complement a zebrafish pkd2-deficient mutant. PKD-mediated phosphorylation at the C-terminus regulates its function in the release of Ca(2+) stores from the endoplasmic reticulum. Phosphorylation at Ser-810 regulates PKD2 trafficking. Phosphorylation at Ser-72 is required for PKD2 trafficking to or retention at the lateral plasma membrane. Phosphorylation at Ser-799, Ser-810 and Ser-827 regulates PKD2 channel activity. In terms of tissue distribution, detected in kidney epithelium (at protein level). Highly expressed on basolateral membranes in distal convoluted tubules and medullary thick ascending limbs of Henle. Detected at much lower levels in cortical and medullary collecting tubules, and not detected in the glomerular tuft, in thin limbs of Henle, interstitium and blood vessels (at protein level). Expressed in mesenchymally derived structures in the developing embryo at day 12.5. Isoform 1 is predominantly expressed in kidney at all developmental stages with high levels also detected in lung. Isoform 3 shows highest expression in brain with lower expression in kidney and lung, low levels in thymus and is hardly detectable in liver.

It is found in the cell projection. The protein resides in the cilium membrane. It localises to the cell membrane. Its subcellular location is the basolateral cell membrane. The protein localises to the cytoplasmic vesicle membrane. It is found in the endoplasmic reticulum membrane. The protein resides in the golgi apparatus. It localises to the vesicle. Its subcellular location is the secreted. The protein localises to the extracellular exosome. It catalyses the reaction K(+)(in) = K(+)(out). The enzyme catalyses Na(+)(in) = Na(+)(out). The catalysed reaction is Ca(2+)(in) = Ca(2+)(out). With respect to regulation, channel activity is regulated by phosphorylation. The channel is activated by increased cytoplasmic Ca(2+) (in the uM range) and by membrane depolarization. TMEM120A inhibits the channel activity of PKD2, and mediates mechanosensitivity of the PKD2-TMEM120A channel complex. At the endoplasmic reticulum membrane (ER), TMEM33 enhances its channel activity. PKD1/ PKD2 complex on the plasma membrane is activated by PKD1 N-terminus. Forms a nonselective cation channel. Can function as a homotetrameric ion channel or can form heteromer with PKD1. Displays distinct function depending on its subcellular localization and regulation by its binding partners. Functions as a cation channel, with a preference for monovalent cations over divalent cations that allows K(+), Na(+) and Ca(2+) influx, with low selectivity for Ca(2+). Involved in fluid-flow mechanosensation by the primary cilium in renal epithelium. In the endoplasmic reticulum, likely functions as a K(+) channel to facilitate Ca(2+) release. The heterotetrameric PKD1/PKD2 channel has higher Ca(2+) permeability than homomeric PKD2 channel and acts as a primarily Ca(2+)-permeable channel. PKD1 and PKD2 may function through a common signaling pathway that is necessary to maintain the normal, differentiated state of renal tubule cells. Interacts with and acts as a regulator of a number of other channels, such as TRPV4, TRPC1, IP3R, RYR2, ultimately further affecting intracellular signaling, to modulate intracellular Ca(2+) signaling. Together with TRPV4, forms mechano- and thermosensitive channels in cilium. In cardiomyocytes, PKD2 modulates Ca(2+) release from stimulated RYR2 receptors through direct association. Also involved in left-right axis specification via its role in sensing nodal flow; forms a complex with PKD1L1 in cilia to facilitate flow detection in left-right patterning. Acts as a regulator of cilium length together with PKD1. Mediates systemic blood pressure and contributes to the myogenic response in cerebral arteries though vasoconstriction. The protein is Polycystin-2 of Mus musculus (Mouse).